The sequence spans 447 residues: Gamma-glutamyl phosphate reductase (447 aa).

The protein belongs to the gamma-glutamyl phosphate reductase family.

The protein localises to the cytoplasm. It carries out the reaction L-glutamate 5-semialdehyde + phosphate + NADP(+) = L-glutamyl 5-phosphate + NADPH + H(+). It functions in the pathway amino-acid biosynthesis; L-proline biosynthesis; L-glutamate 5-semialdehyde from L-glutamate: step 2/2. In terms of biological role, catalyzes the NADPH-dependent reduction of L-glutamate 5-phosphate into L-glutamate 5-semialdehyde and phosphate. The product spontaneously undergoes cyclization to form 1-pyrroline-5-carboxylate. This is Gamma-glutamyl phosphate reductase from Methanosarcina barkeri (strain Fusaro / DSM 804).